The chain runs to 187 residues: MNISLIFANELITRAFGNQGKLPWQFIKEDMQFFQKTTENSVVVMGLNTWRSLPKMKKLGRDFIVISSTITEHEVLNNNIQIFKSFESFLEAFRDTTKPINVIGGVGLLSEAIEHASTVYMSSIHMVKPVHADVYVPVELMNKLYSDFKYPENILWVGDPIDSVYSLSIDKFVRPASLVGVPNDINT.

The region spanning 2 to 174 is the DHFR domain; that stretch reads NISLIFANEL…YSLSIDKFVR (173 aa).

This sequence belongs to the dihydrofolate reductase family. As to quaternary structure, homodimer.

It catalyses the reaction (6S)-5,6,7,8-tetrahydrofolate + NADP(+) = 7,8-dihydrofolate + NADPH + H(+). Its pathway is cofactor biosynthesis; tetrahydrofolate biosynthesis; 5,6,7,8-tetrahydrofolate from 7,8-dihydrofolate: step 1/1. Its function is as follows. Key enzyme in folate metabolism. Catalyzes an essential reaction for de novo glycine and purine synthesis, and for DNA precursor synthesis. The chain is Dihydrofolate reductase type A10 (dfrA10) from Escherichia coli.